The chain runs to 163 residues: HTH-type transcriptional regulator IscR (163 aa).

Residues 2–131 (RLTSKGRYAV…NNITLGELVN (130 aa)) form the HTH rrf2-type domain. The segment at residues 28 to 51 (LADISERQGISLSYLEQLFSRLRK) is a DNA-binding region (H-T-H motif). 3 residues coordinate [2Fe-2S] cluster: Cys-92, Cys-98, and Cys-104.

[2Fe-2S] cluster is required as a cofactor.

Its function is as follows. Regulates the transcription of several operons and genes involved in the biogenesis of Fe-S clusters and Fe-S-containing proteins. This is HTH-type transcriptional regulator IscR from Klebsiella pneumoniae (strain 342).